We begin with the raw amino-acid sequence, 512 residues long: ATP synthase subunit alpha 1 (512 aa).

Residue 169–176 (GDRQTGKT) coordinates ATP.

This sequence belongs to the ATPase alpha/beta chains family. F-type ATPases have 2 components, CF(1) - the catalytic core - and CF(0) - the membrane proton channel. CF(1) has five subunits: alpha(3), beta(3), gamma(1), delta(1), epsilon(1). CF(0) has four main subunits: a(1), b(1), b'(1) and c(9-12).

Its subcellular location is the cell inner membrane. It carries out the reaction ATP + H2O + 4 H(+)(in) = ADP + phosphate + 5 H(+)(out). Produces ATP from ADP in the presence of a proton gradient across the membrane. The alpha chain is a regulatory subunit. In Cereibacter sphaeroides (strain ATCC 17029 / ATH 2.4.9) (Rhodobacter sphaeroides), this protein is ATP synthase subunit alpha 1.